Consider the following 95-residue polypeptide: Aspartyl/glutamyl-tRNA(Asn/Gln) amidotransferase subunit C (95 aa).

Belongs to the GatC family. Heterotrimer of A, B and C subunits.

It catalyses the reaction L-glutamyl-tRNA(Gln) + L-glutamine + ATP + H2O = L-glutaminyl-tRNA(Gln) + L-glutamate + ADP + phosphate + H(+). It carries out the reaction L-aspartyl-tRNA(Asn) + L-glutamine + ATP + H2O = L-asparaginyl-tRNA(Asn) + L-glutamate + ADP + phosphate + 2 H(+). In terms of biological role, allows the formation of correctly charged Asn-tRNA(Asn) or Gln-tRNA(Gln) through the transamidation of misacylated Asp-tRNA(Asn) or Glu-tRNA(Gln) in organisms which lack either or both of asparaginyl-tRNA or glutaminyl-tRNA synthetases. The reaction takes place in the presence of glutamine and ATP through an activated phospho-Asp-tRNA(Asn) or phospho-Glu-tRNA(Gln). This chain is Aspartyl/glutamyl-tRNA(Asn/Gln) amidotransferase subunit C, found in Methylobacterium nodulans (strain LMG 21967 / CNCM I-2342 / ORS 2060).